Here is a 561-residue protein sequence, read N- to C-terminus: Transmembrane protein 209 (561 aa).

Phosphoserine is present on residues serine 9 and serine 11. The chain crosses the membrane as a helical span at residues 28 to 48; it reads VVLAWGLLNVSMAGMIYTEMT. Asparagine 57 carries an N-linked (GlcNAc...) asparagine glycan. The helical transmembrane segment at 60–80 threads the bilayer; sequence YWPLWYIELALASLFSLNALF. At serine 98 the chain carries Phosphoserine. Disordered regions lie at residues 120–156 and 196–233; these read LAAT…KFAT and SLSP…TDKE. Positions 138–152 are enriched in low complexity; that stretch reads SVLSYSPSRSPSTSP. 2 positions are modified to phosphoserine: serine 201 and serine 248. Residues 250–270 form a disordered region; that stretch reads EEKQHRVKLGSPDSTSPSTSP. A compositionally biased stretch (low complexity) spans 260–270; that stretch reads SPDSTSPSTSP. A glycan (N-linked (GlcNAc...) asparagine) is linked at asparagine 274. Position 278 is a phosphoserine (serine 278).

Interacts with NUP205.

Its subcellular location is the membrane. The protein resides in the nucleus envelope. It is found in the golgi apparatus. It localises to the cytoplasm. Nuclear envelope protein which in association with NUP205, may be involved in nuclear transport of various nuclear proteins in addition to MYC. The protein is Transmembrane protein 209 (Tmem209) of Rattus norvegicus (Rat).